A 302-amino-acid polypeptide reads, in one-letter code: ATP synthase gamma chain (302 aa).

This sequence belongs to the ATPase gamma chain family. F-type ATPases have 2 components, CF(1) - the catalytic core - and CF(0) - the membrane proton channel. CF(1) has five subunits: alpha(3), beta(3), gamma(1), delta(1), epsilon(1). CF(0) has three main subunits: a, b and c.

It localises to the cell membrane. In terms of biological role, produces ATP from ADP in the presence of a proton gradient across the membrane. The gamma chain is believed to be important in regulating ATPase activity and the flow of protons through the CF(0) complex. This is ATP synthase gamma chain from Enterococcus faecalis (strain ATCC 700802 / V583).